A 37-amino-acid polypeptide reads, in one-letter code: Tick defensin 2 (37 aa).

Cystine bridges form between Cys-4-Cys-26, Cys-11-Cys-34, and Cys-15-Cys-36.

It belongs to the invertebrate defensin family.

It is found in the secreted. Functionally, antibacterial peptide mostly active against Gram-positive bacteria (MIC=0.24 ug/ml on Bacillus subtilis, and MIC=0.94 ug/ml on Micrococcus luteus, MIC&gt;120 ug/ml on both Escherichia coli and Pseudomonas aeruginosa). In Ornithodoros savignyi (African eyed tampan), this protein is Tick defensin 2.